The following is a 429-amino-acid chain: Glucose-6-phosphate exchanger SLC37A4 (429 aa).

The next 10 membrane-spanning stretches (helical) occupy residues 84 to 104, 105 to 125, 139 to 159, 167 to 187, 219 to 239, 260 to 280, 302 to 322, 329 to 349, 368 to 388, and 394 to 414; these read LLLV…PVFA, ALWF…GKVL, AILS…ATIL, STLA…LLLI, ELLL…VFGV, LVGS…SIAA, GLLL…RVTV, LWIL…IALF, IVGL…STIA, and STAF…FFLL.

Belongs to the major facilitator superfamily. Organophosphate:Pi antiporter (OPA) (TC 2.A.1.4) family. Mostly expressed in liver and kidney.

The protein localises to the endoplasmic reticulum membrane. The enzyme catalyses D-glucose 6-phosphate(in) + phosphate(out) = D-glucose 6-phosphate(out) + phosphate(in). With respect to regulation, inhibited by vanadate and chlorogenic acid. Its function is as follows. Inorganic phosphate and glucose-6-phosphate antiporter of the endoplasmic reticulum. Transports cytoplasmic glucose-6-phosphate into the lumen of the endoplasmic reticulum and translocates inorganic phosphate into the opposite direction. Forms with glucose-6-phosphatase the complex responsible for glucose production through glycogenolysis and gluconeogenesis. Hence, it plays a central role in homeostatic regulation of blood glucose levels. This Homo sapiens (Human) protein is Glucose-6-phosphate exchanger SLC37A4.